Here is a 160-residue protein sequence, read N- to C-terminus: Large ribosomal subunit protein uL11 (160 aa).

This sequence belongs to the universal ribosomal protein uL11 family. In terms of assembly, part of the ribosomal stalk of the 50S ribosomal subunit. Interacts with L10 and the large rRNA to form the base of the stalk. L10 forms an elongated spine to which L12 dimers bind in a sequential fashion forming a multimeric L10(L12)X complex.

Its function is as follows. Forms part of the ribosomal stalk which helps the ribosome interact with GTP-bound translation factors. The chain is Large ribosomal subunit protein uL11 from Nanoarchaeum equitans (strain Kin4-M).